The following is a 576-amino-acid chain: Epsin-1 (576 aa).

Positions 8, 11, 25, 30, 63, and 73 each coordinate a 1,2-diacyl-sn-glycero-3-phospho-(1D-myo-inositol-4,5-bisphosphate). The ENTH domain maps to 12-144; sequence NIVHNYSEAE…RDEDRLREER (133 aa). The interval 149–185 is disordered; sequence KTKEKLAQTATASSAAVGSGPPPEAEQAWPQSSGEEE. Residues 157-167 are compositionally biased toward low complexity; that stretch reads TATASSAAVGS. UIM domains lie at 183 to 202, 208 to 227, and 233 to 252; these read EEEL…ADQP, EDDA…HDKE, and GDDL…TGGK. Positions 265-296 are enriched in low complexity; the sequence is TAPAPAPTTDPWGGPAPMAAAVPTAAPTSDPW. Positions 265–404 are disordered; it reads TAPAPAPTTD…GGFDTEPDEF (140 aa). Tandem repeats lie at residues 274 to 276, 294 to 296, 306 to 308, 319 to 321, 332 to 334, 349 to 351, 367 to 369, and 377 to 379. The segment at 274-379 is 8 X 3 AA repeats of [ED]-P-W; the sequence is DPWGGPAPMA…TPAPAFSDPW (106 aa). The span at 297-314 shows a compositional bias: pro residues; that stretch reads GGPPVPPAADPWGGPAPT. Positions 332–368 are enriched in low complexity; it reads DPWGGTPAPAAGEGPTPDPWGSSDGGVPVSGPSASDP. Residue Ser-382 is modified to Phosphoserine; by CDK1. A [DE]-X(1,2)-F-X-X-[FL]-X-X-X-R motif motif is present at residues 402–411; it reads DEFSDFDRLR. Residues Ser-419, Ser-420, Ser-435, Ser-447, and Ser-454 each carry the phosphoserine modification. The disordered stretch occupies residues 448–576; the sequence is LAEAVGSPPP…PAPNTNPFLL (129 aa). A compositionally biased stretch (pro residues) spans 454-468; that stretch reads SPPPAATPTPTPPTR. Phosphothreonine is present on residues Thr-460, Thr-464, and Thr-470. Ser-473 is subject to Phosphoserine. Thr-494 is subject to Phosphothreonine. Tandem repeats lie at residues 502–504 and 518–520. The interval 502 to 574 is 3 X 3 AA repeats of N-P-F; it reads NPFLPGGGPA…GPPAPNTNPF (73 aa). The residue at position 534 (Arg-534) is an Omega-N-methylarginine. The span at 557–570 shows a compositional bias: pro residues; the sequence is GLPPMMPPGPPAPN. The stretch at 572-574 is repeat 3; sequence NPF.

The protein belongs to the epsin family. Monomer. Binds clathrin, ZBTB16/ZNF145 and ITSN1. Binds ubiquitinated proteins. Binds AP2A1 and AP2A2. Interacts with RALBP1 in a complex also containing NUMB and TFAP2A during interphase and mitosis. Interacts with AP2B1. Interacts with UBQLN2. Interacts with REPS2; the interaction is direct. Interacts with EPS15; the interaction is direct. Interacts with ENTREP1. In terms of processing, phosphorylated on serine and/or threonine residues in mitotic cells. Phosphorylation reduces interaction with REPS2, AP-2 and the membrane fraction. Depolarization of synaptosomes results in dephosphorylation. Ubiquitinated.

The protein localises to the cytoplasm. Its subcellular location is the cell membrane. The protein resides in the nucleus. It is found in the membrane. It localises to the clathrin-coated pit. Functionally, binds to membranes enriched in phosphatidylinositol 4,5-bisphosphate (PtdIns(4,5)P2). Modifies membrane curvature and facilitates the formation of clathrin-coated invaginations. Regulates receptor-mediated endocytosis. This chain is Epsin-1 (EPN1), found in Homo sapiens (Human).